Consider the following 298-residue polypeptide: Glutamyl-Q tRNA(Asp) synthetase (298 aa).

Residues 9 to 13 (RFAPS) and Glu-45 contribute to the L-glutamate site. A 'HIGH' region motif is present at residues 12–22 (PSPTGLLHAGS). Residues Cys-101, Cys-103, Tyr-121, and Cys-125 each contribute to the Zn(2+) site. Residues Tyr-179 and Arg-197 each contribute to the L-glutamate site. The short motif at 235-239 (KLSKQ) is the 'KMSKS' region element. Lys-238 provides a ligand contact to ATP.

Belongs to the class-I aminoacyl-tRNA synthetase family. GluQ subfamily. Zn(2+) is required as a cofactor.

Catalyzes the tRNA-independent activation of glutamate in presence of ATP and the subsequent transfer of glutamate onto a tRNA(Asp). Glutamate is transferred on the 2-amino-5-(4,5-dihydroxy-2-cyclopenten-1-yl) moiety of the queuosine in the wobble position of the QUC anticodon. This is Glutamyl-Q tRNA(Asp) synthetase from Chromobacterium violaceum (strain ATCC 12472 / DSM 30191 / JCM 1249 / CCUG 213 / NBRC 12614 / NCIMB 9131 / NCTC 9757 / MK).